Reading from the N-terminus, the 791-residue chain is Endonuclease MutS2 (791 aa).

ATP is bound at residue 337 to 344 (GPNTGGKT). Residues 689 to 715 (AAQASQKKPEKSVRSSRGLRSSRASSE) are disordered. The span at 703–713 (SSRGLRSSRAS) shows a compositional bias: low complexity. Residues 716 to 791 (LDLRGQRYEE…GTGATIVNLQ (76 aa)) form the Smr domain.

Belongs to the DNA mismatch repair MutS family. MutS2 subfamily. In terms of assembly, homodimer. Binds to stalled ribosomes, contacting rRNA.

Its function is as follows. Endonuclease that is involved in the suppression of homologous recombination and thus may have a key role in the control of bacterial genetic diversity. In terms of biological role, acts as a ribosome collision sensor, splitting the ribosome into its 2 subunits. Detects stalled/collided 70S ribosomes which it binds and splits by an ATP-hydrolysis driven conformational change. Acts upstream of the ribosome quality control system (RQC), a ribosome-associated complex that mediates the extraction of incompletely synthesized nascent chains from stalled ribosomes and their subsequent degradation. Probably generates substrates for RQC. The chain is Endonuclease MutS2 from Lactobacillus gasseri (strain ATCC 33323 / DSM 20243 / BCRC 14619 / CIP 102991 / JCM 1131 / KCTC 3163 / NCIMB 11718 / NCTC 13722 / AM63).